A 791-amino-acid polypeptide reads, in one-letter code: Probable phosphoketolase (791 aa).

The protein belongs to the XFP family. Thiamine diphosphate serves as cofactor.

The sequence is that of Probable phosphoketolase from Pseudomonas putida (strain ATCC 700007 / DSM 6899 / JCM 31910 / BCRC 17059 / LMG 24140 / F1).